Here is a 66-residue protein sequence, read N- to C-terminus: MRARELRAQTLDQMKDELAKLKKEQFNLRFQKATGQLEKAARVRQVRRDIARVKTFLRQKIKESKV.

This sequence belongs to the universal ribosomal protein uL29 family.

The sequence is that of Large ribosomal subunit protein uL29 from Bartonella quintana (strain Toulouse) (Rochalimaea quintana).